A 251-amino-acid polypeptide reads, in one-letter code: Ubiquinone/menaquinone biosynthesis C-methyltransferase UbiE (251 aa).

S-adenosyl-L-methionine contacts are provided by residues threonine 74, aspartate 95, asparagine 123–alanine 124, and serine 140.

The protein belongs to the class I-like SAM-binding methyltransferase superfamily. MenG/UbiE family.

The enzyme catalyses a 2-demethylmenaquinol + S-adenosyl-L-methionine = a menaquinol + S-adenosyl-L-homocysteine + H(+). It carries out the reaction a 2-methoxy-6-(all-trans-polyprenyl)benzene-1,4-diol + S-adenosyl-L-methionine = a 5-methoxy-2-methyl-3-(all-trans-polyprenyl)benzene-1,4-diol + S-adenosyl-L-homocysteine + H(+). It functions in the pathway quinol/quinone metabolism; menaquinone biosynthesis; menaquinol from 1,4-dihydroxy-2-naphthoate: step 2/2. Its pathway is cofactor biosynthesis; ubiquinone biosynthesis. Functionally, methyltransferase required for the conversion of demethylmenaquinol (DMKH2) to menaquinol (MKH2) and the conversion of 2-polyprenyl-6-methoxy-1,4-benzoquinol (DDMQH2) to 2-polyprenyl-3-methyl-6-methoxy-1,4-benzoquinol (DMQH2). The chain is Ubiquinone/menaquinone biosynthesis C-methyltransferase UbiE from Pectobacterium atrosepticum (strain SCRI 1043 / ATCC BAA-672) (Erwinia carotovora subsp. atroseptica).